We begin with the raw amino-acid sequence, 743 residues long: 1,4-alpha-glucan branching enzyme GlgB (743 aa).

The active-site Nucleophile is the aspartate 423. The active-site Proton donor is the glutamate 476.

Belongs to the glycosyl hydrolase 13 family. GlgB subfamily. As to quaternary structure, monomer.

It carries out the reaction Transfers a segment of a (1-&gt;4)-alpha-D-glucan chain to a primary hydroxy group in a similar glucan chain.. The protein operates within glycan biosynthesis; glycogen biosynthesis. Catalyzes the formation of the alpha-1,6-glucosidic linkages in glycogen by scission of a 1,4-alpha-linked oligosaccharide from growing alpha-1,4-glucan chains and the subsequent attachment of the oligosaccharide to the alpha-1,6 position. The chain is 1,4-alpha-glucan branching enzyme GlgB from Pseudomonas fluorescens (strain Pf0-1).